We begin with the raw amino-acid sequence, 515 residues long: MFSTLSPSAIDDILRHAVHFGQGTTAIAPSPVTFISTTTQQSLGATYPGVFNPTTPTFNHYQHQALPVTMHTSTSSAHHTTTGHGRGRRKNSTINLVCVVCGDQAFGKHYGVNACNGCKGFFRRSVWHNRQYLCRFEGRCAIAKEHRNVCRACRLKQCFVAGMNPRAVQSERVEREQNGSPNQIEEDDYKDLSSPDTCSVEIQTDVDEQKPSSNNSAPLPSMELEMAKLSEQIVEMHRAVCSYVDPVTKRENFDMKMETETTKIAFMNAFYNPEMIGPRTPLDITGRRVATVKDVMDEWKRNFVLFSDWLRALPEYNQMSIEDQIVLAKNRYGTFHWWMCANWTVQAGCEGVCYSNGAYFPKQPEAQCIPDVKGSSGRMYDSLSIPIKELNLDETEIVLMLAVIIFSDEITELADLTPAGKEHVRMVGNRFVRMLHHHVNSKEYGEAMENGDDTQNSSESQAAVRIAKMMILLSATTNLVYLTSDNIQLMEVLHVVPSEYLCHEVQFIQNSYETP.

The segment at residues 95-170 (NLVCVVCGDQ…AGMNPRAVQS (76 aa)) is a DNA-binding region (nuclear receptor). 2 consecutive NR C4-type zinc fingers follow at residues 98–118 (CVVC…CNGC) and 134–153 (CRFE…CRAC). Residues 169 to 195 (QSERVEREQNGSPNQIEEDDYKDLSSP) form a disordered region. Positions 225–509 (EMAKLSEQIV…YLCHEVQFIQ (285 aa)) constitute an NR LBD domain. The segment at 498–509 (SEYLCHEVQFIQ) is AF-2.

Belongs to the nuclear hormone receptor family. Widely expressed at a low level in many tissues including the pharynx, sensory neurons, intestine, spermatheca, hypodermis, and excretory cell.

The protein resides in the nucleus. In terms of biological role, orphan nuclear hormone receptor. Required for metabolic and physiologic responses associated with dietary-restriction-induced longevity. Modulates triglyceride and lipid metabolism and autophagy, associated with dietary-restriction, probably acting via regulation of transcription of target genes. This Caenorhabditis elegans protein is Nuclear hormone receptor family member nhr-62 (nhr-62).